Reading from the N-terminus, the 339-residue chain is DNA-directed RNA polymerase subunit alpha (339 aa).

An alpha N-terminal domain (alpha-NTD) region spans residues 1–235; it reads MVLQKNWQSL…DQLQLFINFD (235 aa). The segment at 251 to 339 is alpha C-terminal domain (alpha-CTD); that stretch reads FNRNLLRKVD…DLAKRLDETF (89 aa).

It belongs to the RNA polymerase alpha chain family. As to quaternary structure, homodimer. The RNAP catalytic core consists of 2 alpha, 1 beta, 1 beta' and 1 omega subunit. When a sigma factor is associated with the core the holoenzyme is formed, which can initiate transcription.

It carries out the reaction RNA(n) + a ribonucleoside 5'-triphosphate = RNA(n+1) + diphosphate. In terms of biological role, DNA-dependent RNA polymerase catalyzes the transcription of DNA into RNA using the four ribonucleoside triphosphates as substrates. This is DNA-directed RNA polymerase subunit alpha from Gluconobacter oxydans (strain 621H) (Gluconobacter suboxydans).